The primary structure comprises 212 residues: MAHRETNGSKLFITVLCMVAACSAVPINDLLDRASQRSDMLHSLSTTLTKDLSNHVPPVGWTMMPRPPLCHTSSLQTPNDKEQALQLSESDLMSLARSLLQAWQDPLVDLSNSANSLLHPSQSSISNKIRELQEHSKSLGDGLDILSGKMGPAAQAISSLPYRGSNDIGEDNISKLTNFHFLLSCFRRDSHKIDSFLKVLRCRAAKVQPEMC.

Residues 1–24 (MAHRETNGSKLFITVLCMVAACSA) form the signal peptide. Intrachain disulfides connect C70/C185 and C202/C212.

It belongs to the somatotropin/prolactin family.

Its subcellular location is the secreted. In Sparus aurata (Gilthead sea bream), this protein is Prolactin (prl).